The sequence spans 169 residues: S-ribosylhomocysteine lyase (169 aa).

Residues histidine 54, histidine 58, and cysteine 128 each coordinate Fe cation.

Belongs to the LuxS family. Homodimer. Fe cation is required as a cofactor.

It carries out the reaction S-(5-deoxy-D-ribos-5-yl)-L-homocysteine = (S)-4,5-dihydroxypentane-2,3-dione + L-homocysteine. Functionally, involved in the synthesis of autoinducer 2 (AI-2) which is secreted by bacteria and is used to communicate both the cell density and the metabolic potential of the environment. The regulation of gene expression in response to changes in cell density is called quorum sensing. Catalyzes the transformation of S-ribosylhomocysteine (RHC) to homocysteine (HC) and 4,5-dihydroxy-2,3-pentadione (DPD). The sequence is that of S-ribosylhomocysteine lyase from Shewanella sediminis (strain HAW-EB3).